The primary structure comprises 113 residues: Protein Rev (113 aa).

Positions 15 to 23 (LIKFLYQSN) are homomultimerization. Residues 17–45 (KFLYQSNPPPSPEGTRQARRNRRRRWRQR) form a disordered region. Residues 31-47 (TRQARRNRRRRWRQRQR) carry the Nuclear localization signal and RNA-binding (RRE) motif. The segment covering 33–45 (QARRNRRRRWRQR) has biased composition (basic residues). Positions 70–81 (LQLPPLERLTLD) match the Nuclear export signal and binding to XPO1 motif. Residues serine 89 and serine 96 each carry the phosphoserine; by host modification. The segment at 89–113 (SGTQGVGSPQILVESPTILESGTKE) is disordered.

This sequence belongs to the HIV-1 REV protein family. As to quaternary structure, homomultimer; when bound to the RRE. Multimeric assembly is essential for activity and may involve XPO1. Binds to human KPNB1, XPO1, TNPO1, RANBP5 and IPO7. Interacts with the viral Integrase. Interacts with human KHDRBS1. Interacts with human NAP1; this interaction decreases Rev multimerization and stimulates its activity. Interacts with human DEAD-box helicases DDX3 and DDX24; these interactions may serve for viral RNA export to the cytoplasm and packaging, respectively. Interacts with human PSIP1; this interaction may inhibit HIV-1 DNA integration by promoting dissociation of the Integrase-LEDGF/p75 complex. Post-translationally, asymmetrically arginine dimethylated at one site by host PRMT6. Methylation impairs the RNA-binding activity and export of viral RNA from the nucleus to the cytoplasm. Phosphorylated by protein kinase CK2. Presence of, and maybe binding to the N-terminus of the regulatory beta subunit of CK2 is necessary for CK2-mediated Rev's phosphorylation.

It localises to the host nucleus. The protein localises to the host nucleolus. It is found in the host cytoplasm. In terms of biological role, escorts unspliced or incompletely spliced viral pre-mRNAs (late transcripts) out of the nucleus of infected cells. These pre-mRNAs carry a recognition sequence called Rev responsive element (RRE) located in the env gene, that is not present in fully spliced viral mRNAs (early transcripts). This function is essential since most viral proteins are translated from unspliced or partially spliced pre-mRNAs which cannot exit the nucleus by the pathway used by fully processed cellular mRNAs. Rev itself is translated from a fully spliced mRNA that readily exits the nucleus. Rev's nuclear localization signal (NLS) binds directly to KPNB1/Importin beta-1 without previous binding to KPNA1/Importin alpha-1. KPNB1 binds to the GDP bound form of RAN (Ran-GDP) and targets Rev to the nucleus. In the nucleus, the conversion from Ran-GDP to Ran-GTP dissociates Rev from KPNB1 and allows Rev's binding to the RRE in viral pre-mRNAs. Rev multimerization on the RRE via cooperative assembly exposes its nuclear export signal (NES) to the surface. Rev can then form a complex with XPO1/CRM1 and Ran-GTP, leading to nuclear export of the complex. Conversion from Ran-GTP to Ran-GDP mediates dissociation of the Rev/RRE/XPO1/RAN complex, so that Rev can return to the nucleus for a subsequent round of export. Beside KPNB1, also seems to interact with TNPO1/Transportin-1, RANBP5/IPO5 and IPO7/RANBP7 for nuclear import. The nucleoporin-like HRB/RIP is an essential cofactor that probably indirectly interacts with Rev to release HIV RNAs from the perinuclear region to the cytoplasm. The sequence is that of Protein Rev from Human immunodeficiency virus type 1 group M subtype B (isolate JH32) (HIV-1).